Consider the following 367-residue polypeptide: Molybdopterin synthase catalytic subunit (367 aa).

Residues 101-102 (HR), Lys-117, and 124-126 (KKE) each bind substrate. Positions 326–345 (HFTKREPSSMEAAPPKKIRK) are disordered.

The protein belongs to the MoaE family. MOCS2B subfamily. As to quaternary structure, heterotetramer; composed of 2 small (Mocs2A) and 2 large (Mocs2B) subunits.

It localises to the cytoplasm. The catalysed reaction is 2 [molybdopterin-synthase sulfur-carrier protein]-C-terminal-Gly-aminoethanethioate + cyclic pyranopterin phosphate + H2O = molybdopterin + 2 [molybdopterin-synthase sulfur-carrier protein]-C-terminal Gly-Gly + 2 H(+). It participates in cofactor biosynthesis; molybdopterin biosynthesis. Functionally, catalytic subunit of the molybdopterin synthase complex, a complex that catalyzes the conversion of precursor Z into molybdopterin. Acts by mediating the incorporation of 2 sulfur atoms from thiocarboxylated Mocs2A into precursor Z to generate a dithiolene group. In Drosophila sechellia (Fruit fly), this protein is Molybdopterin synthase catalytic subunit.